The sequence spans 56 residues: Small ribosomal subunit protein uS14 (56 aa).

Residues Cys-21, Cys-24, Cys-39, and Cys-42 each coordinate Zn(2+).

This sequence belongs to the universal ribosomal protein uS14 family. In terms of assembly, component of the 40S small ribosomal subunit. Zn(2+) serves as cofactor.

It localises to the cytoplasm. Its subcellular location is the cytosol. The protein localises to the rough endoplasmic reticulum. This is Small ribosomal subunit protein uS14 (RpS29) from Lonomia obliqua (Moth).